Here is a 397-residue protein sequence, read N- to C-terminus: ORC1-type DNA replication protein 8 (397 aa).

Residues 61-65, tyrosine 211, and arginine 223 contribute to the ATP site; that span reads VGKTA.

The protein belongs to the CDC6/cdc18 family.

Functionally, involved in regulation of DNA replication. The protein is ORC1-type DNA replication protein 8 (orc8) of Halobacterium salinarum (strain ATCC 700922 / JCM 11081 / NRC-1) (Halobacterium halobium).